The chain runs to 394 residues: Elongation factor Tu (394 aa).

The region spanning 10-204 is the tr-type G domain; the sequence is KPHINIGTIG…AVDDNIPTPE (195 aa). A G1 region spans residues 19-26; sequence GHVDHGKT. 19-26 provides a ligand contact to GTP; that stretch reads GHVDHGKT. Thr26 is a binding site for Mg(2+). The segment at 60–64 is G2; the sequence is GITIN. The segment at 81-84 is G3; sequence DCPG. GTP contacts are provided by residues 81–85 and 136–139; these read DCPGH and NKVD. The G4 stretch occupies residues 136-139; sequence NKVD. The G5 stretch occupies residues 174–176; that stretch reads SAL.

The protein belongs to the TRAFAC class translation factor GTPase superfamily. Classic translation factor GTPase family. EF-Tu/EF-1A subfamily. As to quaternary structure, monomer.

The protein resides in the cytoplasm. The catalysed reaction is GTP + H2O = GDP + phosphate + H(+). Functionally, GTP hydrolase that promotes the GTP-dependent binding of aminoacyl-tRNA to the A-site of ribosomes during protein biosynthesis. The protein is Elongation factor Tu of Chlamydia pneumoniae (Chlamydophila pneumoniae).